Reading from the N-terminus, the 154-residue chain is Transcriptional repressor NrdR (154 aa).

Residues 3-34 (CPFCGANDTKVIDSRLVAEGEQVRRRRECLAC) fold into a zinc finger. Residues 49–139 (PRLIKTDGSR…VYRRFQDLNE (91 aa)) form the ATP-cone domain.

This sequence belongs to the NrdR family. It depends on Zn(2+) as a cofactor.

In terms of biological role, negatively regulates transcription of bacterial ribonucleotide reductase nrd genes and operons by binding to NrdR-boxes. This Pseudomonas fluorescens (strain ATCC BAA-477 / NRRL B-23932 / Pf-5) protein is Transcriptional repressor NrdR.